A 109-amino-acid polypeptide reads, in one-letter code: Nucleoid-associated protein HI_0442 (109 aa).

This sequence belongs to the YbaB/EbfC family. As to quaternary structure, homodimer.

The protein resides in the cytoplasm. Its subcellular location is the nucleoid. Functionally, binds to DNA and alters its conformation. May be involved in regulation of gene expression, nucleoid organization and DNA protection. This Haemophilus influenzae (strain ATCC 51907 / DSM 11121 / KW20 / Rd) protein is Nucleoid-associated protein HI_0442.